The following is a 67-amino-acid chain: MSSLKYANTDITIKMVIITPKVLEDDSLSESSIHFANNRFHFDLYYIKPWAFVSILYLFLCFLYNII.

This is an uncharacterized protein from Fowlpox virus (strain NVSL) (FPV).